Consider the following 695-residue polypeptide: Tail-specific protease (695 aa).

Residues 1–29 (MVMKFKMSKNVICYTWLSVCLSSAIPAFA) form the signal peptide. Positions 256–316 (IGTTLQSEDD…RLEDLVEKIK (61 aa)) constitute a PDZ domain. Residues serine 459, aspartate 470, and lysine 484 each act as charge relay system in the active site.

This sequence belongs to the peptidase S41A family.

The protein resides in the cell inner membrane. The catalysed reaction is The enzyme shows specific recognition of a C-terminal tripeptide, Xaa-Yaa-Zaa, in which Xaa is preferably Ala or Leu, Yaa is preferably Ala or Tyr, and Zaa is preferably Ala, but then cleaves at a variable distance from the C-terminus. A typical cleavage is -Ala-Ala-|-Arg-Ala-Ala-Lys-Glu-Asn-Tyr-Ala-Leu-Ala-Ala.. In terms of biological role, involved in the cleavage of a C-terminal peptide of 11 residues from the precursor form of penicillin-binding protein 3 (PBP3). May be involved in protection of the bacterium from thermal and osmotic stresses. The polypeptide is Tail-specific protease (prc) (Haemophilus influenzae (strain ATCC 51907 / DSM 11121 / KW20 / Rd)).